An 85-amino-acid chain; its full sequence is Large ribosomal subunit protein bL27 (85 aa).

Residues 1–21 (MAHKKAGGSTRNGRDSEGKRL) form a disordered region.

It belongs to the bacterial ribosomal protein bL27 family.

The polypeptide is Large ribosomal subunit protein bL27 (Hamiltonella defensa subsp. Acyrthosiphon pisum (strain 5AT)).